The sequence spans 194 residues: UPF0301 protein BQ03640 (194 aa).

This sequence belongs to the UPF0301 (AlgH) family.

This chain is UPF0301 protein BQ03640, found in Bartonella quintana (strain Toulouse) (Rochalimaea quintana).